We begin with the raw amino-acid sequence, 321 residues long: Small ribosomal subunit biogenesis GTPase RsgA (321 aa).

Positions 89 to 248 (QSWINRPPVA…VADTPGFNRP (160 aa)) constitute a CP-type G domain. GTP-binding positions include 138–141 (TKRD) and 190–198 (GPSGVGKTS). Zn(2+) is bound by residues C273, C278, H280, and C286.

The protein belongs to the TRAFAC class YlqF/YawG GTPase family. RsgA subfamily. Monomer. Associates with 30S ribosomal subunit, binds 16S rRNA. It depends on Zn(2+) as a cofactor.

The protein resides in the cytoplasm. Its function is as follows. One of several proteins that assist in the late maturation steps of the functional core of the 30S ribosomal subunit. Helps release RbfA from mature subunits. May play a role in the assembly of ribosomal proteins into the subunit. Circularly permuted GTPase that catalyzes slow GTP hydrolysis, GTPase activity is stimulated by the 30S ribosomal subunit. The protein is Small ribosomal subunit biogenesis GTPase RsgA of Prochlorococcus marinus (strain MIT 9303).